A 265-amino-acid polypeptide reads, in one-letter code: Protein N-terminal and lysine N-methyltransferase EFM7 (265 aa).

Residues 1-25 form a disordered region; it reads MSSDHEEDSLYGATELFGEPDGFYE. Residues Trp-67, 93–95, Asp-115, Trp-152, and Ser-176 contribute to the S-adenosyl-L-methionine site; that span reads GAA.

This sequence belongs to the class I-like SAM-binding methyltransferase superfamily. EFM7 family.

It localises to the cytoplasm. Functionally, S-adenosyl-L-methionine-dependent protein methyltransferase that trimethylates the N-terminal glycine 'Gly-2' of elongation factor 1-alpha, before also catalyzing the mono- and dimethylation of 'Lys-3'. This Eremothecium gossypii (strain ATCC 10895 / CBS 109.51 / FGSC 9923 / NRRL Y-1056) (Yeast) protein is Protein N-terminal and lysine N-methyltransferase EFM7.